Reading from the N-terminus, the 719-residue chain is Alpha-galactosidase 2 (719 aa).

Asp-472 serves as the catalytic Nucleophile. Asp-542 serves as the catalytic Proton donor.

This sequence belongs to the glycosyl hydrolase 36 family.

The enzyme catalyses Hydrolysis of terminal, non-reducing alpha-D-galactose residues in alpha-D-galactosides, including galactose oligosaccharides, galactomannans and galactolipids.. Alpha-galactosidase associated with the sucrase operon. This Pediococcus pentosaceus protein is Alpha-galactosidase 2 (agaS).